Reading from the N-terminus, the 283-residue chain is Pantothenate synthetase (283 aa).

34-41 (MGALHDGH) contributes to the ATP binding site. Histidine 41 functions as the Proton donor in the catalytic mechanism. Glutamine 65 contacts (R)-pantoate. Residue glutamine 65 participates in beta-alanine binding. 152-155 (GQKD) is an ATP binding site. A (R)-pantoate-binding site is contributed by glutamine 158. Residues valine 181 and 189 to 192 (MSSR) each bind ATP.

This sequence belongs to the pantothenate synthetase family. As to quaternary structure, homodimer.

It localises to the cytoplasm. It carries out the reaction (R)-pantoate + beta-alanine + ATP = (R)-pantothenate + AMP + diphosphate + H(+). It functions in the pathway cofactor biosynthesis; (R)-pantothenate biosynthesis; (R)-pantothenate from (R)-pantoate and beta-alanine: step 1/1. In terms of biological role, catalyzes the condensation of pantoate with beta-alanine in an ATP-dependent reaction via a pantoyl-adenylate intermediate. This chain is Pantothenate synthetase, found in Nitrobacter hamburgensis (strain DSM 10229 / NCIMB 13809 / X14).